Reading from the N-terminus, the 149-residue chain is UPF0179 protein Hlac_2319 (149 aa).

The protein belongs to the UPF0179 family.

This Halorubrum lacusprofundi (strain ATCC 49239 / DSM 5036 / JCM 8891 / ACAM 34) protein is UPF0179 protein Hlac_2319.